The following is a 252-amino-acid chain: MNMIDLNSDLGEGFGQWKMGDDNTMLSIVTSANVACGFHAGDPAGIFQTLKSAHKNQVVIGAHVSYPDLVGFGRRNMDVSSNELIADVIYQIGALKGLAVAAGTTVSYVKPHGALYNTIAHNEYQALAVITAIREVDDNLVLVGLAGSKLLDLAQENGLRTVAEAFADRAYTPQGTLVSRREKGSVLHDANLVARRMLQLVTEGGVEAIDGSFTRIQADSICVHGDSPDAVEMARQVKLTLQQAGITVRSFI.

It belongs to the LamB/PxpA family. Forms a complex composed of PxpA, PxpB and PxpC.

It carries out the reaction 5-oxo-L-proline + ATP + 2 H2O = L-glutamate + ADP + phosphate + H(+). Catalyzes the cleavage of 5-oxoproline to form L-glutamate coupled to the hydrolysis of ATP to ADP and inorganic phosphate. This is 5-oxoprolinase subunit A from Photorhabdus laumondii subsp. laumondii (strain DSM 15139 / CIP 105565 / TT01) (Photorhabdus luminescens subsp. laumondii).